The chain runs to 89 residues: Putative membrane protein insertion efficiency factor (89 aa).

Belongs to the UPF0161 family.

The protein resides in the cell membrane. In terms of biological role, could be involved in insertion of integral membrane proteins into the membrane. This is Putative membrane protein insertion efficiency factor from Exiguobacterium sp. (strain ATCC BAA-1283 / AT1b).